A 732-amino-acid chain; its full sequence is Zinc/cadmium/lead-transporting P-type ATPase (732 aa).

Over 1–124 (MSTPDNHGKK…QAAEEPQASR (124 aa)) the chain is Cytoplasmic. Residues 48–112 (TRYSWKVSGM…ALQKAGYSLR (65 aa)) form the HMA domain. The Zn(2+) site is built by Asp58, Cys59, and Cys62. The helical transmembrane segment at 125–145 (LKENLPLITLIVMMAISWGLE) threads the bilayer. Position 146 (Gln146) is a topological domain, periplasmic. Residues 147 to 167 (FNHPFGQLAFIATTLVGLYPI) traverse the membrane as a helical segment. Over 168–179 (ARQALRLIKSGS) the chain is Cytoplasmic. Residues 180-197 (YFAIETLMSVAAIGALFI) traverse the membrane as a helical segment. Topologically, residues 198–202 (GATAE) are periplasmic. A helical transmembrane segment spans residues 203 to 222 (AAMVLLLFLIGERLEGWAAS). The Cytoplasmic segment spans residues 223–356 (RARQGVSALM…IDRFSRIYTP (134 aa)). The helical transmembrane segment at 357–377 (AIMAVALLVTLVPPLLFAASW) threads the bilayer. The Periplasmic segment spans residues 378 to 383 (QEWIYK). Residues 384-404 (GLTLLLIGCPCALVISTPAAI) form a helical membrane-spanning segment. Residues Cys392 and Cys394 each contribute to the Zn(2+) site. At 405 to 685 (TSGLAAAARR…RATHANIRQN (281 aa)) the chain is on the cytoplasmic side. Catalysis depends on Asp436, which acts as the 4-aspartylphosphate intermediate. Mg(2+) is bound by residues Asp436, Thr438, and Asp628. Residues 686-702 (ITIALGLKGIFLVTTLL) form a helical membrane-spanning segment. The Periplasmic portion of the chain corresponds to 703-707 (GMTGL). The helical transmembrane segment at 708–729 (WLAVLADTGATVLVTANALRLL) threads the bilayer. Residue Asp714 coordinates Zn(2+). Residues 730–732 (RRR) are Cytoplasmic-facing.

Belongs to the cation transport ATPase (P-type) (TC 3.A.3) family. Type IB subfamily.

Its subcellular location is the cell inner membrane. The enzyme catalyses Pb(2+)(in) + ATP + H2O = Pb(2+)(out) + ADP + phosphate + H(+). The catalysed reaction is Zn(2+)(in) + ATP + H2O = Zn(2+)(out) + ADP + phosphate + H(+). It catalyses the reaction Cd(2+)(in) + ATP + H2O = Cd(2+)(out) + ADP + phosphate + H(+). Inhibited by orthovanadate. Confers resistance to zinc, cadmium and lead. Couples the hydrolysis of ATP with the export of zinc, cadmium or lead, with highest activity when the metals are present as metal-thiolate complexes. Can also bind nickel, copper, cobalt and mercury. The polypeptide is Zinc/cadmium/lead-transporting P-type ATPase (Escherichia coli (strain K12)).